A 563-amino-acid chain; its full sequence is MNTKELIAAEIAKVVPELEQENIQNLLEIPKNADMGDLAFPAFSLAKVLRKAPQMIAADIAEKIDASNFEKVEAVGPYINIFLDKSKISADVLGQVIAQGSHYADQNIGNGRNIAFDMSSPNIAKPFSIGHLRSTVIADALANIVAKQGYKPVRINHLGDWGKQFGMLIVAYKKWGSEEAVKANPINELLQLYVRINAEAEEDPSVDEEAREWFRKLEAGDEEATALWQWFRDESLVEFNRLYDELGVSFDSYNGEAFYNDKMDEVVDILTEKGLLQESQGAQVVNLEKYGIEHPALIKKSDGATLYITRDLAAALYRKRTYDFAKAIYVVGNEQSAHFKQLKAVLKEMGYNWSDDMTHVAFGLVTKNGKKLSTRKGNVILLEPTIAEAVNRAQAQIEAKNPNLPNKEAIAHAVGVGAIKFYDLKTDRMNGYDFDLDAMVSFEGETGPYVQYAHARIQSILRKADFTPSADATYSLNDVESWEIIKLLQDFPRIINRASDNFEPSIVAKFAISLAQAFNKYYAHTRILDESPERDSRLALCYATATVLKEALRLLGVEAPDEM.

A 'HIGH' region motif is present at residues 121–131 (PNIAKPFSIGH).

Belongs to the class-I aminoacyl-tRNA synthetase family. Monomer.

The protein localises to the cytoplasm. It carries out the reaction tRNA(Arg) + L-arginine + ATP = L-arginyl-tRNA(Arg) + AMP + diphosphate. This is Arginine--tRNA ligase from Streptococcus thermophilus (strain CNRZ 1066).